The primary structure comprises 658 residues: MRGCLQTVRWLTSAWQRPRSYSPLSRAAPCRFFNVSIPRNAQSRKPVSELERRIAAISIDRFRNFCIVAHVDHGKSTLSDRLLELTGTIQPGGNKQVLDKLDVERERGITVKAQTCTMLYNYRGEDYLLHLVDTPGHVDFRAEVSRSYASCGGALLLVDASQGVQAQTVANFYLAFAEGLKLVPVINKVDLPSADPDRALEQMANTFELDPKSAVLVSAKTGLNVEQLLPTVVEQIPAPVGDHTKPLRMLLVDSWYSTYKGVILLVRIFDGEVRAGDHVGSLATGLKYHVGEVGIMYPGQTAQSVLRAGQVGYIYFNPAMKRSQEAKVGDTYTKVGSEKLIEPLPGFEEPKSMVFVAAYPVDASDFPHLEDSINQLLLNDRSITLQKESSEALGAGFRLGFLGTLHCSVFEDRLRQEHGASIIITPPTVPFKVIWKDGKEEIITNPALFPEEDALRAKVVELQEPFVLATLTFPEEYLGRVIELCESNRGEQKSLEFFTATQVILKYELPLAQLVDDFFGKLKGSTKGYASLDYEESGWRRSSIAKLQLLVNKVPVDAVSRVVHSSQAQKLGRLWVSKFKEHVDRQMFEVVIQAAVGRNIVARETIKPFRKDVLQKLHAADVTRRRKLLEKQKEGRKKLKAVGNVVIEHKAFQAFLAK.

Residues 1-40 (MRGCLQTVRWLTSAWQRPRSYSPLSRAAPCRFFNVSIPRN) constitute a mitochondrion transit peptide. A tr-type G domain is found at 60–240 (DRFRNFCIVA…TVVEQIPAPV (181 aa)). GTP-binding positions include 69–76 (AHVDHGKS), 133–137 (DTPGH), and 187–190 (NKVD).

The protein belongs to the TRAFAC class translation factor GTPase superfamily. Classic translation factor GTPase family. LepA subfamily.

It is found in the mitochondrion inner membrane. The catalysed reaction is GTP + H2O = GDP + phosphate + H(+). Its function is as follows. Promotes mitochondrial protein synthesis. May act as a fidelity factor of the translation reaction, by catalyzing a one-codon backward translocation of tRNAs on improperly translocated ribosomes. Binds to mitochondrial ribosomes in a GTP-dependent manner. The sequence is that of Translation factor GUF1, mitochondrial from Paracoccidioides lutzii (strain ATCC MYA-826 / Pb01) (Paracoccidioides brasiliensis).